Consider the following 112-residue polypeptide: MEDKEELRKLLRSMMRKSTDPRTKMQDEYLTDEDKAIQRSERPPAKKRACKDCTCGLKEEQEVRTRSACGNCYKGDAFRCSGCPSLGLPPYEPGDVVSFSMDLSNEFQGEDA.

A disordered region spans residues 8–112 (RKLLRSMMRK…LSNEFQGEDA (105 aa)). Residues Cys69, Cys72, Cys80, and Cys83 each contribute to the [4Fe-4S] cluster site. 2 short sequence motifs (cx2C motif) span residues 69–72 (CGNC) and 80–83 (CSGC). Residues 69–83 (CGNCYKGDAFRCSGC) form a fe-S binding site B region.

This sequence belongs to the anamorsin family. Monomer. Interacts with TAH18. Interacts with MIA40. The cofactor is [4Fe-4S] cluster.

The protein resides in the cytoplasm. It is found in the mitochondrion intermembrane space. Component of the cytosolic iron-sulfur (Fe-S) protein assembly (CIA) machinery required for the maturation of extramitochondrial Fe-S proteins. Part of an electron transfer chain functioning in an early step of cytosolic Fe-S biogenesis, facilitating the de novo assembly of a [4Fe-4S] cluster on the scaffold complex CFD1-NBP35. Electrons are transferred to DRE2 from NADPH via the FAD- and FMN-containing protein TAH18. TAH18-DRE2 are also required for the assembly of the diferric tyrosyl radical cofactor of ribonucleotide reductase (RNR), probably by providing electrons for reduction during radical cofactor maturation in the catalytic small subunit RNR2. This is Fe-S cluster assembly protein DRE2 (DRE2) from Encephalitozoon cuniculi (strain GB-M1) (Microsporidian parasite).